We begin with the raw amino-acid sequence, 175 residues long: Transcriptional repressor NrdR (175 aa).

A zinc finger spans residues 3–32 (CPYCSHPDSKVIDSRDVDDGVRRRRECVVC). One can recognise an ATP-cone domain in the interval 47-137 (LFVVKKDQRR…VYREFTDITQ (91 aa)).

Belongs to the NrdR family. Zn(2+) is required as a cofactor.

In terms of biological role, negatively regulates transcription of bacterial ribonucleotide reductase nrd genes and operons by binding to NrdR-boxes. In Dehalococcoides mccartyi (strain ATCC BAA-2100 / JCM 16839 / KCTC 5957 / BAV1), this protein is Transcriptional repressor NrdR.